Reading from the N-terminus, the 495-residue chain is Rho GTPase-activating protein 19 (495 aa).

Residues 98 to 304 enclose the Rho-GAP domain; that stretch reads MSLKRKEKGV…FMIKHSQKLF (207 aa). Disordered stretches follow at residues 327-362 and 393-495; these read KDDL…ETQQ and KHPS…SSSL. 3 stretches are compositionally biased toward basic and acidic residues: residues 350 to 362, 433 to 452, and 470 to 481; these read SRLD…ETQQ, QERK…KENV, and KSLEGQKEESCR.

GTPase activator for the Rho-type GTPases by converting them to an inactive GDP-bound state. The sequence is that of Rho GTPase-activating protein 19 (ARHGAP19) from Gallus gallus (Chicken).